The following is a 135-amino-acid chain: UPF0306 protein C8J_1355 (135 aa).

This sequence belongs to the UPF0306 family.

The protein is UPF0306 protein C8J_1355 of Campylobacter jejuni subsp. jejuni serotype O:6 (strain 81116 / NCTC 11828).